The primary structure comprises 500 residues: Proline/betaine transporter (500 aa).

Residues 1–37 (MLKRKKIKPITLGDVTIIDDGKLRKAITAASLGNAME) are Cytoplasmic-facing. The helical transmembrane segment at 38–58 (WFDFGVYGFVAYALGKVFFPG) threads the bilayer. Over 59–65 (ADPSVQM) the chain is Periplasmic. A helical membrane pass occupies residues 66–86 (IAALATFSVPFLIRPLGGLFF). Over 87–97 (GMLGDKYGRQK) the chain is Cytoplasmic. The helical transmembrane segment at 98–118 (ILAITIVIMSISTFCIGLIPS) threads the bilayer. The Periplasmic portion of the chain corresponds to 119–121 (YAT). The helical transmembrane segment at 122–142 (IGIWAPILLLLCKMAQGFSVG) threads the bilayer. Topologically, residues 143 to 169 (GEYTGASIFVAEYSPDRKRGFMGSWLD) are cytoplasmic. The helical transmembrane segment at 170–190 (FGSIAGFVLGAGVVVLISTIV) threads the bilayer. Residues 191-194 (GEEN) lie on the Periplasmic side of the membrane. A helical transmembrane segment spans residues 195–215 (FLEWGWRIPFFIALPLGIIGL). The Cytoplasmic portion of the chain corresponds to 216 to 260 (YLRHALEETPAFQQHVDKLEQGDREGLQDGPKVSFKEIATKHWRS). The chain crosses the membrane as a helical span at residues 261–281 (LLSCIGLVIATNVTYYMLLTY). Residues 282–297 (MPSYLSHNLHYSEDHG) are Periplasmic-facing. Residues 298–318 (VLIIIAIMIGMLFVQPVMGLL) form a helical membrane-spanning segment. Topologically, residues 319 to 325 (SDRFGRR) are cytoplasmic. The chain crosses the membrane as a helical span at residues 326–346 (PFVIMGSIALFALAIPAFILI). Over 347–350 (NSNV) the chain is Periplasmic. The chain crosses the membrane as a helical span at residues 351-371 (IGLIFAGLLMLAVILNCFTGV). Topologically, residues 372–390 (MASTLPAMFPTHIRYSALA) are cytoplasmic. Residues 391–411 (AAFNISVLIAGLTPTLAAWLV) traverse the membrane as a helical segment. The Periplasmic segment spans residues 412 to 416 (ESSQD). A helical transmembrane segment spans residues 417–437 (LMMPAYYLMVIAVIGLITGIS). Topologically, residues 438-500 (MKETANRPLK…LVQQHPRIDE (63 aa)) are cytoplasmic. Residues 453–498 (ASDIQEAKEILGEHYDNIEQKIDDIDQEIAELQVKRSRLVQQHPRI) adopt a coiled-coil conformation.

It belongs to the major facilitator superfamily. Metabolite:H+ Symporter (MHS) family (TC 2.A.1.6) family.

Its subcellular location is the cell inner membrane. Its function is as follows. Proton symporter that senses osmotic shifts and responds by importing osmolytes such as proline, glycine betaine, stachydrine, pipecolic acid, ectoine and taurine. It is both an osmosensor and an osmoregulator which is available to participate early in the bacterial osmoregulatory response. The polypeptide is Proline/betaine transporter (proP) (Salmonella typhimurium (strain LT2 / SGSC1412 / ATCC 700720)).